The following is a 103-amino-acid chain: Small ribosomal subunit protein uS10 (103 aa).

It belongs to the universal ribosomal protein uS10 family. In terms of assembly, part of the 30S ribosomal subunit.

Its function is as follows. Involved in the binding of tRNA to the ribosomes. This chain is Small ribosomal subunit protein uS10, found in Colwellia psychrerythraea (strain 34H / ATCC BAA-681) (Vibrio psychroerythus).